The sequence spans 170 residues: MVAASHRSPDRPGDPEGLEPGTGRGRRLGIDVGTVRIGVASSDPDGILATPLETVRRERSGKHLRRLATLVGETEAVEVIVGLPRTLADRIGSSAQDAIDLADELAARVAPIPVRLADERLTTVSAQRSLREAGVRAKNQRAVIDQAAAVAILQAWLDQRRTLAGGRADG.

Residues 1-29 are disordered; sequence MVAASHRSPDRPGDPEGLEPGTGRGRRLG.

This sequence belongs to the YqgF nuclease family.

The protein resides in the cytoplasm. Its function is as follows. Could be a nuclease involved in processing of the 5'-end of pre-16S rRNA. The chain is Putative pre-16S rRNA nuclease from Mycobacterium ulcerans (strain Agy99).